The chain runs to 274 residues: UPF0173 metal-dependent hydrolase AnaeK_1127 (274 aa).

It belongs to the UPF0173 family.

The chain is UPF0173 metal-dependent hydrolase AnaeK_1127 from Anaeromyxobacter sp. (strain K).